The sequence spans 453 residues: Methionine aminopeptidase 2-1 (453 aa).

Residues M1–S12 show a composition bias toward basic and acidic residues. The tract at residues M1 to T101 is disordered. A compositionally biased stretch (acidic residues) spans G46–E57. Over residues K67–K82 the composition is skewed to basic residues. H210 lines the substrate pocket. A divalent metal cation contacts are provided by D231, D242, and H306. H314 provides a ligand contact to substrate. The a divalent metal cation site is built by E339 and E434.

This sequence belongs to the peptidase M24A family. Methionine aminopeptidase eukaryotic type 2 subfamily. Requires Co(2+) as cofactor. Zn(2+) is required as a cofactor. It depends on Mn(2+) as a cofactor. The cofactor is Fe(2+).

Its subcellular location is the cytoplasm. The catalysed reaction is Release of N-terminal amino acids, preferentially methionine, from peptides and arylamides.. Functionally, cotranslationally removes the N-terminal methionine from nascent proteins. The N-terminal methionine is often cleaved when the second residue in the primary sequence is small and uncharged (Met-Ala-, Cys, Gly, Pro, Ser, Thr, or Val). The protein is Methionine aminopeptidase 2-1 of Aspergillus terreus (strain NIH 2624 / FGSC A1156).